Reading from the N-terminus, the 208-residue chain is Ribonuclease HII (208 aa).

One can recognise an RNase H type-2 domain in the interval 5 to 198 (PLIAGVDEVG…CQPRLEHDCR (194 aa)). A divalent metal cation contacts are provided by D11, E12, and D106.

The protein belongs to the RNase HII family. Mn(2+) serves as cofactor. Mg(2+) is required as a cofactor.

The protein localises to the cytoplasm. The enzyme catalyses Endonucleolytic cleavage to 5'-phosphomonoester.. Functionally, endonuclease that specifically degrades the RNA of RNA-DNA hybrids. The sequence is that of Ribonuclease HII from Microcystis aeruginosa (strain NIES-843 / IAM M-2473).